The sequence spans 253 residues: Patatin-like phospholipase domain-containing protein 4 (253 aa).

The region spanning 6-176 is the PNPLA domain; it reads LSFAACGFLG…TNALPILPVG (171 aa). A GXSXG motif is present at residues 41-45; sequence GASAG. Residue Ser43 is the Nucleophile of the active site. The Proton acceptor role is filled by Asp163. A DGA/G motif is present at residues 163–165; the sequence is DGG.

In terms of tissue distribution, expressed in all tissues examined, including heart, brain, placenta, lung, liver, muscle, kidney, pancreas and spleen.

Its subcellular location is the mitochondrion. It carries out the reaction a triacylglycerol + H2O = a diacylglycerol + a fatty acid + H(+). The catalysed reaction is a 1,2-diacyl-sn-glycero-3-phosphocholine + H2O = a 1-acyl-sn-glycero-3-phosphocholine + a fatty acid + H(+). The enzyme catalyses an all-trans-retinyl ester + H2O = all-trans-retinol + a fatty acid + H(+). It catalyses the reaction 2 a 1-acylglycerol = a 1,2-diacylglycerol + glycerol. It carries out the reaction a 1-acylglycerol + a 1,2-diacylglycerol = a triacylglycerol + glycerol. The catalysed reaction is a 1-acylglycerol + a 1,3-diacylglycerol = a triacylglycerol + glycerol. The enzyme catalyses a triacylglycerol + H2O = a 1,2-diacylglycerol + a fatty acid + H(+). It catalyses the reaction a triacylglycerol + H2O = a 1,3-diacylglycerol + a fatty acid + H(+). It carries out the reaction a triacylglycerol + all-trans-retinol = an all-trans-retinyl ester + a diacylglycerol. The catalysed reaction is 2 1-(9Z-octadecenoyl)-glycerol = 1,2-di-(9Z-octadecenoyl)-glycerol + glycerol. The enzyme catalyses 1-(9Z-octadecenoyl)-glycerol + 1,2-di-(9Z-octadecenoyl)-glycerol = 1,2,3-tri-(9Z-octadecenoyl)-glycerol + glycerol. It catalyses the reaction 1-(9Z-octadecenoyl)-glycerol + 1,3-di-(9Z-octadecenoyl)-glycerol = 1,2,3-tri-(9Z-octadecenoyl)-glycerol + glycerol. It carries out the reaction 1,2-di-(9Z-octadecenoyl)-glycerol + (9Z)-octadecenoate + H(+) = 1,2,3-tri-(9Z-octadecenoyl)-glycerol + H2O. The catalysed reaction is 1,2,3-tri-(9Z-octadecenoyl)-glycerol + H2O = 1,3-di-(9Z-octadecenoyl)-glycerol + (9Z)-octadecenoate + H(+). The enzyme catalyses all-trans-retinyl hexadecanoate + H2O = all-trans-retinol + hexadecanoate + H(+). It catalyses the reaction 1,2,3-tri-(9Z-octadecenoyl)-glycerol + all-trans-retinol = all-trans-retinyl 9Z-octadecenoate + di-(9Z)-octadecenoylglycerol. The triglyceride lipase activity is inhibited by BEL ((E)-6-(bromomethylene)-3-(1-naphthalenyl)-2H-tetrahydropyran-2-one), a suicide substrate inhibitor. Has abundant triacylglycerol lipase activity. Transfers fatty acid from triglyceride to retinol, hydrolyzes retinylesters, and generates 1,3-diacylglycerol from triglycerides. Additionally possesses acylglycerol transacylase and phospholipase A2 activities. The chain is Patatin-like phospholipase domain-containing protein 4 from Homo sapiens (Human).